A 576-amino-acid polypeptide reads, in one-letter code: Arginine--tRNA ligase (576 aa).

The 'HIGH' region motif lies at 126–136 (ANPTGPMHIGH).

Belongs to the class-I aminoacyl-tRNA synthetase family. In terms of assembly, monomer.

The protein resides in the cytoplasm. It catalyses the reaction tRNA(Arg) + L-arginine + ATP = L-arginyl-tRNA(Arg) + AMP + diphosphate. In Rickettsia bellii (strain OSU 85-389), this protein is Arginine--tRNA ligase.